The following is a 455-amino-acid chain: tRNA modification GTPase MnmE (455 aa).

Residues R24, E86, and R125 each coordinate (6S)-5-formyl-5,6,7,8-tetrahydrofolate. Residues 220-376 (GLTVAIIGRP…LETAILETVQ (157 aa)) form the TrmE-type G domain. A K(+)-binding site is contributed by N230. GTP contacts are provided by residues 230–235 (NVGKSS), 249–255 (TDLPGTT), and 274–277 (DTAG). Mg(2+) is bound at residue S234. K(+) is bound by residues T249, L251, and T254. T255 contributes to the Mg(2+) binding site. Residue K455 coordinates (6S)-5-formyl-5,6,7,8-tetrahydrofolate.

It belongs to the TRAFAC class TrmE-Era-EngA-EngB-Septin-like GTPase superfamily. TrmE GTPase family. Homodimer. Heterotetramer of two MnmE and two MnmG subunits. Requires K(+) as cofactor.

Its subcellular location is the cytoplasm. In terms of biological role, exhibits a very high intrinsic GTPase hydrolysis rate. Involved in the addition of a carboxymethylaminomethyl (cmnm) group at the wobble position (U34) of certain tRNAs, forming tRNA-cmnm(5)s(2)U34. This chain is tRNA modification GTPase MnmE, found in Acaryochloris marina (strain MBIC 11017).